A 373-amino-acid polypeptide reads, in one-letter code: tRNA-specific 2-thiouridylase MnmA (373 aa).

Residues 12 to 19 (GMSGGVDS) and M38 each bind ATP. An interaction with target base in tRNA region spans residues 98–100 (NPD). The active-site Nucleophile is C103. C103 and C200 are joined by a disulfide. G127 lines the ATP pocket. Positions 150 to 152 (KDQ) are interaction with tRNA. Catalysis depends on C200, which acts as the Cysteine persulfide intermediate. Positions 312 to 313 (RY) are interaction with tRNA.

This sequence belongs to the MnmA/TRMU family.

It localises to the cytoplasm. It carries out the reaction S-sulfanyl-L-cysteinyl-[protein] + uridine(34) in tRNA + AH2 + ATP = 2-thiouridine(34) in tRNA + L-cysteinyl-[protein] + A + AMP + diphosphate + H(+). Its function is as follows. Catalyzes the 2-thiolation of uridine at the wobble position (U34) of tRNA, leading to the formation of s(2)U34. The polypeptide is tRNA-specific 2-thiouridylase MnmA (Streptococcus pneumoniae (strain P1031)).